The primary structure comprises 359 residues: 3-dehydroquinate synthase (359 aa).

NAD(+) contacts are provided by residues aspartate 71–lysine 76, glycine 105–aspartate 109, threonine 129–threonine 130, lysine 142, and lysine 151. 3 residues coordinate Zn(2+): glutamate 184, histidine 247, and histidine 263.

The protein belongs to the sugar phosphate cyclases superfamily. Dehydroquinate synthase family. Requires NAD(+) as cofactor. The cofactor is Co(2+). Zn(2+) is required as a cofactor.

The protein localises to the cytoplasm. It catalyses the reaction 7-phospho-2-dehydro-3-deoxy-D-arabino-heptonate = 3-dehydroquinate + phosphate. Its pathway is metabolic intermediate biosynthesis; chorismate biosynthesis; chorismate from D-erythrose 4-phosphate and phosphoenolpyruvate: step 2/7. In terms of biological role, catalyzes the conversion of 3-deoxy-D-arabino-heptulosonate 7-phosphate (DAHP) to dehydroquinate (DHQ). The chain is 3-dehydroquinate synthase from Leifsonia xyli subsp. xyli (strain CTCB07).